The following is a 177-amino-acid chain: Adenine phosphoribosyltransferase (177 aa).

Belongs to the purine/pyrimidine phosphoribosyltransferase family. Homodimer.

The protein resides in the cytoplasm. It carries out the reaction AMP + diphosphate = 5-phospho-alpha-D-ribose 1-diphosphate + adenine. It functions in the pathway purine metabolism; AMP biosynthesis via salvage pathway; AMP from adenine: step 1/1. In terms of biological role, catalyzes a salvage reaction resulting in the formation of AMP, that is energically less costly than de novo synthesis. This is Adenine phosphoribosyltransferase from Leuconostoc citreum (strain KM20).